A 141-amino-acid chain; its full sequence is Hemoglobin subunit alpha (141 aa).

The Globin domain maps to 1-141 (VLSAADKGHV…VSTVLTSKYR (141 aa)). Position 3 is a phosphoserine (serine 3). N6-succinyllysine is present on residues lysine 7 and lysine 11. Lysine 16 is modified (N6-acetyllysine; alternate). At lysine 16 the chain carries N6-succinyllysine; alternate. Residue tyrosine 24 is modified to Phosphotyrosine. Phosphoserine is present on serine 35. Lysine 40 bears the N6-succinyllysine mark. The residue at position 49 (serine 49) is a Phosphoserine. Histidine 58 contributes to the O2 binding site. Histidine 87 is a binding site for heme b. The residue at position 102 (serine 102) is a Phosphoserine. The residue at position 108 (threonine 108) is a Phosphothreonine. Serine 124 is modified (phosphoserine). 2 positions are modified to phosphothreonine: threonine 134 and threonine 137. Serine 138 carries the phosphoserine modification.

It belongs to the globin family. Heterotetramer of two alpha chains and two beta chains. In terms of tissue distribution, red blood cells.

Functionally, involved in oxygen transport from the lung to the various peripheral tissues. In terms of biological role, hemopressin acts as an antagonist peptide of the cannabinoid receptor CNR1. Hemopressin-binding efficiently blocks cannabinoid receptor CNR1 and subsequent signaling. The polypeptide is Hemoglobin subunit alpha (HBA) (Macropus giganteus (Eastern gray kangaroo)).